Reading from the N-terminus, the 173-residue chain is UPF0316 protein Amet_0954 (173 aa).

Transmembrane regions (helical) follow at residues 3-23 (LVLG…MGTV), 38-58 (AIGF…LEAL), and 61-81 (PVNI…GIYI).

The protein belongs to the UPF0316 family.

The protein localises to the cell membrane. This is UPF0316 protein Amet_0954 from Alkaliphilus metalliredigens (strain QYMF).